We begin with the raw amino-acid sequence, 115 residues long: U3-lycotoxin-Ls1a (115 aa).

The signal sequence occupies residues 1–20 (MKFVLLFGVLLVTLFSYSSA). A propeptide spanning residues 21–44 (EMLDDFDQADEEELLSLIEKEEAR) is cleaved from the precursor. Cystine bridges form between Cys-48/Cys-63, Cys-55/Cys-72, Cys-62/Cys-87, and Cys-74/Cys-85.

This sequence belongs to the neurotoxin 19 (CSTX) family. 01 subfamily. In terms of tissue distribution, expressed by the venom gland.

Its subcellular location is the secreted. The sequence is that of U3-lycotoxin-Ls1a from Lycosa singoriensis (Wolf spider).